Consider the following 400-residue polypeptide: MGGWSSKPRKGMGTNLSVPNPLGFFPDHQLDPAFGANSNNPDWDFNPVKDDWPAANQVGVGAFGPRLTPPHGGILGWSPQAQGILTTVSTIPPPASTNRQSGRQPTPISPPLRDSHPQAMQWNSTAFHQTLQDPRVRGLYLPAGGSSSGTVNPAPNIASHISSISARTGDPVTNMENITSGFLGPLLVLQAGFFLLTRILTIPQSLDSWWTSLNFLGGSPVCLGQNSQSPTSNHSPTSCPPICPGYRWMCLRRFIIFLFILLLCLIFLLVLLDYQGMLPVCPLIPGSTTTSTGPCKTCTTPAQGNSMFPSCCCTKPTDGNCTCIPIPSSWAFAKYLWEWASVRFSWLSLLVPFVQWFVGLSPTVWLSAIWMMWYWGPSLYSIVSPFIPLLPIFFCLWVYI.

Position 1 is an N-acetylmethionine (M1). 2 disordered regions span residues 1–20 and 89–115; these read MGGW…SVPN and STIP…LRDS. G2 carries N-myristoyl glycine; by host lipidation. The segment at 2–119 is pre-S1; it reads GGWSSKPRKG…PPLRDSHPQA (118 aa). The tract at residues 2-174 is pre-S; the sequence is GGWSSKPRKG…SARTGDPVTN (173 aa). Over 2-181 the chain is Virion surface; in external conformation; that stretch reads GGWSSKPRKG…VTNMENITSG (180 aa). Topologically, residues 2–253 are intravirion; in internal conformation; it reads GGWSSKPRKG…PGYRWMCLRR (252 aa). Residue W4 is glycosylated (N-linked (GlcNAc...) asparagine). Residues 89 to 106 show a composition bias toward polar residues; the sequence is STIPPPASTNRQSGRQPT. Residues 120–174 are pre-S2; it reads MQWNSTAFHQTLQDPRVRGLYLPAGGSSSGTVNPAPNIASHISSISARTGDPVTN. The chain crosses the membrane as a helical span at residues 182–202; it reads FLGPLLVLQAGFFLLTRILTI. At 203-253 the chain is on the intravirion; in external conformation side; sequence PQSLDSWWTSLNFLGGSPVCLGQNSQSPTSNHSPTSCPPICPGYRWMCLRR. The chain crosses the membrane as a helical span at residues 254–274; the sequence is FIIFLFILLLCLIFLLVLLDY. Topologically, residues 275–348 are virion surface; sequence QGMLPVCPLI…WASVRFSWLS (74 aa). N320 is a glycosylation site (N-linked (GlcNAc...) asparagine; by host; partial). Residues 349-369 traverse the membrane as a helical segment; sequence LLVPFVQWFVGLSPTVWLSAI. The Intravirion portion of the chain corresponds to 370-375; that stretch reads WMMWYW. The helical transmembrane segment at 376–398 threads the bilayer; it reads GPSLYSIVSPFIPLLPIFFCLWV. Residues 399 to 400 lie on the Virion surface side of the membrane; that stretch reads YI.

Belongs to the orthohepadnavirus major surface antigen family. In its internal form (Li-HBsAg), interacts with the capsid protein and with the isoform S. Interacts with host chaperone CANX. As to quaternary structure, associates with host chaperone CANX through its pre-S2 N glycan; this association may be essential for isoform M proper secretion. In terms of assembly, interacts with isoform L. Interacts with the antigens of satellite virus HDV (HDVAgs); this interaction is required for encapsidation of HDV genomic RNA. Post-translationally, isoform M is N-terminally acetylated by host at a ratio of 90%, and N-glycosylated by host at the pre-S2 region. Myristoylated.

Its subcellular location is the virion membrane. Its function is as follows. The large envelope protein exists in two topological conformations, one which is termed 'external' or Le-HBsAg and the other 'internal' or Li-HBsAg. In its external conformation the protein attaches the virus to cell receptors and thereby initiating infection. This interaction determines the species specificity and liver tropism. This attachment induces virion internalization predominantly through caveolin-mediated endocytosis. The large envelope protein also assures fusion between virion membrane and endosomal membrane. In its internal conformation the protein plays a role in virion morphogenesis and mediates the contact with the nucleocapsid like a matrix protein. The middle envelope protein plays an important role in the budding of the virion. It is involved in the induction of budding in a nucleocapsid independent way. In this process the majority of envelope proteins bud to form subviral lipoprotein particles of 22 nm of diameter that do not contain a nucleocapsid. This is Large envelope protein from Hepatitis B virus genotype A2 subtype adw2 (strain Rutter 1979) (HBV-A).